The primary structure comprises 494 residues: Probable cytosol aminopeptidase (494 aa).

Residues K260 and D265 each contribute to the Mn(2+) site. Residue K272 is part of the active site. Residues D283, D342, and E344 each contribute to the Mn(2+) site. R346 is a catalytic residue.

It belongs to the peptidase M17 family. The cofactor is Mn(2+).

The protein localises to the cytoplasm. It catalyses the reaction Release of an N-terminal amino acid, Xaa-|-Yaa-, in which Xaa is preferably Leu, but may be other amino acids including Pro although not Arg or Lys, and Yaa may be Pro. Amino acid amides and methyl esters are also readily hydrolyzed, but rates on arylamides are exceedingly low.. The enzyme catalyses Release of an N-terminal amino acid, preferentially leucine, but not glutamic or aspartic acids.. Presumably involved in the processing and regular turnover of intracellular proteins. Catalyzes the removal of unsubstituted N-terminal amino acids from various peptides. The sequence is that of Probable cytosol aminopeptidase from Bacillus cereus (strain B4264).